A 102-amino-acid polypeptide reads, in one-letter code: Small ribosomal subunit protein uS10 (102 aa).

A disordered region spans residues 37 to 61; sequence PIPLPTKSLKITTRKSTDGEGSSSF.

It belongs to the universal ribosomal protein uS10 family. Part of the 30S ribosomal subunit.

Its function is as follows. Involved in the binding of tRNA to the ribosomes. This chain is Small ribosomal subunit protein uS10, found in Methanococcus vannielii (strain ATCC 35089 / DSM 1224 / JCM 13029 / OCM 148 / SB).